Consider the following 83-residue polypeptide: Small ribosomal subunit protein bS18A (83 aa).

Belongs to the bacterial ribosomal protein bS18 family. Part of the 30S ribosomal subunit. Forms a tight heterodimer with protein bS6.

Binds as a heterodimer with protein bS6 to the central domain of the 16S rRNA, where it helps stabilize the platform of the 30S subunit. The protein is Small ribosomal subunit protein bS18A of Mycolicibacterium vanbaalenii (strain DSM 7251 / JCM 13017 / BCRC 16820 / KCTC 9966 / NRRL B-24157 / PYR-1) (Mycobacterium vanbaalenii).